We begin with the raw amino-acid sequence, 241 residues long: Urease accessory protein UreF 1 (241 aa).

Belongs to the UreF family. UreD, UreF and UreG form a complex that acts as a GTP-hydrolysis-dependent molecular chaperone, activating the urease apoprotein by helping to assemble the nickel containing metallocenter of UreC. The UreE protein probably delivers the nickel.

The protein localises to the cytoplasm. Its function is as follows. Required for maturation of urease via the functional incorporation of the urease nickel metallocenter. The polypeptide is Urease accessory protein UreF 1 (Brucella melitensis biotype 1 (strain ATCC 23456 / CCUG 17765 / NCTC 10094 / 16M)).